Consider the following 419-residue polypeptide: MDKFRVQGPTKLQGEVTISGAKNAALPILFAALLAEEPVEIQNVPKLKDVDTSMKLLSQLGAKVERNGSVHIDARDVNVFCAPYELVKTMRASIWALGPLVARFGQGQVSLPGGCSIGARPVDLHISGLEQLGATIKLEEGYVKASVEGRLKGAHIVMDKVSVGATVTIMCAATLAEGTTIIENAAREPEIVDTANFLVTLGAKISGQGTDRITIEGVERLGGGVYRVLPDRIETGTFLVAAAISRGKIICRNAQPDTLDAVLAKLRDAGADIETGDDWISLDMHGKRPKAVNVRTAPHPAFPTDMQAQFTLLNLVAEGTGFITETVFENRFMHVPELSRMGAHAEIESNTVICHGVEKLSGAQVMATDLRASASLVLAGCIAEGTTIVDRIYHIDRGYERIEDKLRALGANIERVKGE.

22-23 (KN) serves as a coordination point for phosphoenolpyruvate. R91 is a binding site for UDP-N-acetyl-alpha-D-glucosamine. The active-site Proton donor is the C115. C115 is subject to 2-(S-cysteinyl)pyruvic acid O-phosphothioketal. UDP-N-acetyl-alpha-D-glucosamine-binding positions include 120-124 (RPVDL), 160-163 (KVSV), D305, and V327.

The protein belongs to the EPSP synthase family. MurA subfamily.

The protein localises to the cytoplasm. The catalysed reaction is phosphoenolpyruvate + UDP-N-acetyl-alpha-D-glucosamine = UDP-N-acetyl-3-O-(1-carboxyvinyl)-alpha-D-glucosamine + phosphate. It functions in the pathway cell wall biogenesis; peptidoglycan biosynthesis. Its function is as follows. Cell wall formation. Adds enolpyruvyl to UDP-N-acetylglucosamine. This is UDP-N-acetylglucosamine 1-carboxyvinyltransferase from Escherichia fergusonii (strain ATCC 35469 / DSM 13698 / CCUG 18766 / IAM 14443 / JCM 21226 / LMG 7866 / NBRC 102419 / NCTC 12128 / CDC 0568-73).